Here is a 409-residue protein sequence, read N- to C-terminus: Arginine deiminase (409 aa).

Catalysis depends on Cys399, which acts as the Amidino-cysteine intermediate.

This sequence belongs to the arginine deiminase family.

It is found in the cytoplasm. The enzyme catalyses L-arginine + H2O = L-citrulline + NH4(+). Its pathway is amino-acid degradation; L-arginine degradation via ADI pathway; carbamoyl phosphate from L-arginine: step 1/2. This is Arginine deiminase from Borreliella afzelii (strain PKo) (Borrelia afzelii).